We begin with the raw amino-acid sequence, 457 residues long: Transcription factor PCF7 (457 aa).

A coiled-coil region spans residues 58–84 (STLHYLLQEKERAQQAHEQLQIYQQQQ). A disordered region spans residues 95–121 (RQPASRGPGGGGGGGDGGGSSGESTPV). A compositionally biased stretch (gly residues) spans 101–115 (GPGGGGGGGDGGGSS). The TCP domain occupies 140 to 198 (RKDRHSKVCTARGLRDRRVRLAAHTAIRFYDVQDRLGYDRPSKAVDWLMRNAKAAIDEL). Disordered stretches follow at residues 199–231 (PDRA…GFGN) and 263–299 (KSLF…SNQQ). The span at 212 to 230 (STEQPEGTEQANSTSYGFG) shows a compositional bias: polar residues. Low complexity predominate over residues 268–278 (SSSTASGAASA).

Forms homodimers and heterodimers.

Its subcellular location is the nucleus. Functionally, transcription activator. Binds the promoter core sequence 5'-GGNCC-3'. This is Transcription factor PCF7 (PCF7) from Oryza sativa subsp. indica (Rice).